A 486-amino-acid polypeptide reads, in one-letter code: MSSVKRRKTDKNPSLEGLKSKKTKESKKESHTPSPEPIEDTEDNRVIEETEEAEEDDAPKSFKDLGIVDSLCEACDTLGYKAPTPIQRESIPLALQGRDLIGLAETGSGKTAAFALPILQALLDKPQPLFGLVLAPTRELAYQISQQFEALGSVIRVKCAVIVGGMDMVPQSIALGKKPHIIVATPGRLLDHLENTKGFSLRSLKYLVMDEADRLLDLDFGPILDKILKVLPRERRTYLFSATISSKVESLQRASLKDPLRVSISSNKYQTVSTLIQNYIFIPLIHKDTYLIYLLNEFAGQSAIIFTRTVNETQRIAILLRTLGFGAIPLHGQLSQSSRLGALNKFRAGSREILVATDVAARGLDIPSVDVVLNYDVPQDSKTYIHRVGRTARAGKSGHAISVVTQYDLEIFMRIEAALGKKQVEYPTVKDEVMVFKPRVEEAQRHARNEMKNLHEDRGKKGAVLKGRRPANGAKRGRDEMDREEG.

The segment at 1–60 (MSSVKRRKTDKNPSLEGLKSKKTKESKKESHTPSPEPIEDTEDNRVIEETEEAEEDDAPK) is disordered. A Q motif motif is present at residues 60–88 (KSFKDLGIVDSLCEACDTLGYKAPTPIQR). The Helicase ATP-binding domain maps to 91-262 (IPLALQGRDL…RASLKDPLRV (172 aa)). Residue 104–111 (AETGSGKT) coordinates ATP. The DEAD box motif lies at 210–213 (DEAD). The Helicase C-terminal domain occupies 286 to 434 (HKDTYLIYLL…EYPTVKDEVM (149 aa)). Composition is skewed to basic and acidic residues over residues 447–460 (ARNEMKNLHEDRGK) and 476–486 (RGRDEMDREEG). The disordered stretch occupies residues 447-486 (ARNEMKNLHEDRGKKGAVLKGRRPANGAKRGRDEMDREEG).

This sequence belongs to the DEAD box helicase family. DDX47/RRP3 subfamily. As to quaternary structure, interacts with the SSU processome.

The protein localises to the nucleus. The enzyme catalyses ATP + H2O = ADP + phosphate + H(+). Functionally, ATP-dependent rRNA helicase required for pre-ribosomal RNA processing. Involved in the maturation of the 35S-pre-rRNA and to its cleavage to mature 18S rRNA. The chain is ATP-dependent rRNA helicase rrp3 from Botryotinia fuckeliana (strain B05.10) (Noble rot fungus).